A 359-amino-acid polypeptide reads, in one-letter code: Serine/threonine-protein phosphatase 2A activator 2 (359 aa).

The protein belongs to the PTPA-type PPIase family.

The protein resides in the cytoplasm. It catalyses the reaction [protein]-peptidylproline (omega=180) = [protein]-peptidylproline (omega=0). PPIases accelerate the folding of proteins. It catalyzes the cis-trans isomerization of proline imidic peptide bonds in oligopeptides. Acts as a regulatory subunit for PP2A-like phosphatases modulating their activity or substrate specificity, probably by inducing a conformational change in the catalytic subunit, a direct target of the PPIase. Can reactivate inactive phosphatase PP2A-phosphatase methylesterase complexes (PP2Ai) in presence of ATP and Mg(2+) by dissociating the inactive form from the complex. The chain is Serine/threonine-protein phosphatase 2A activator 2 (RRD2) from Eremothecium gossypii (strain ATCC 10895 / CBS 109.51 / FGSC 9923 / NRRL Y-1056) (Yeast).